Consider the following 153-residue polypeptide: Transcriptional repressor NrdR (153 aa).

A zinc finger spans residues 3 to 34 (CPFCGYEDTRVLDSRELSEGRAIRRRRECPQC). Positions 49–139 (ITVIKKDGRR…VYKDFREIDQ (91 aa)) constitute an ATP-cone domain.

The protein belongs to the NrdR family. Zn(2+) serves as cofactor.

Functionally, negatively regulates transcription of bacterial ribonucleotide reductase nrd genes and operons by binding to NrdR-boxes. The polypeptide is Transcriptional repressor NrdR (Fervidobacterium nodosum (strain ATCC 35602 / DSM 5306 / Rt17-B1)).